The sequence spans 391 residues: Transforming growth factor beta-1 proprotein (391 aa).

An N-terminal signal peptide occupies residues 1–18; sequence MDPSPLLALLLLLGAARA. A straightjacket domain region spans residues 19-63; sequence LSTCQRLDLEAAKKKRIEAVRGQILSKLRLTAPPPASETPPRPLP. The segment at 64 to 270 is arm domain; sequence DDVRALYNST…ALPAERANEL (207 aa). N-linked (GlcNAc...) asparagine glycans are attached at residues Asn-71, Asn-126, and Asn-171. Residues 221–249 are bowtie tail; sequence EMGPGHADEMRISIEGFEQQRGDMQSIAK. The Cell attachment site motif lies at 241–243; that stretch reads RGD. 4 cysteine pairs are disulfide-bonded: Cys-284–Cys-295, Cys-294–Cys-357, Cys-323–Cys-388, and Cys-327–Cys-390.

It belongs to the TGF-beta family. In terms of assembly, latency-associated peptide: Homodimer; disulfide-linked. Latency-associated peptide: Interacts with Transforming growth factor beta-1 (TGF-beta-1) chain; interaction is non-covalent and maintains (TGF-beta-1) in a latent state; each Latency-associated peptide (LAP) monomer interacts with TGF-beta-1 in the other monomer. Transforming growth factor beta-1: Homodimer; disulfide-linked. Transforming growth factor beta-1: Interacts with TGF-beta receptors (TGFBR1 and TGFBR2), leading to signal transduction. Post-translationally, transforming growth factor beta-1 proprotein: The precursor proprotein is cleaved in the Golgi apparatus to form Transforming growth factor beta-1 (TGF-beta-1) and Latency-associated peptide (LAP) chains, which remain non-covalently linked, rendering TGF-beta-1 inactive.

Its subcellular location is the secreted. The protein localises to the extracellular space. It localises to the extracellular matrix. In terms of biological role, transforming growth factor beta-1 proprotein: Precursor of the Latency-associated peptide (LAP) and Transforming growth factor beta-1 (TGF-beta-1) chains, which constitute the regulatory and active subunit of TGF-beta-1, respectively. Its function is as follows. Required to maintain the Transforming growth factor beta-1 (TGF-beta-1) chain in a latent state during storage in extracellular matrix. Associates non-covalently with TGF-beta-1 and regulates its activation via interaction with 'milieu molecules', such as LTBP1, LRRC32/GARP and LRRC33/NRROS, that control activation of TGF-beta-1. Interaction with integrins (ITGAV:ITGB6 or ITGAV:ITGB8) results in distortion of the Latency-associated peptide chain and subsequent release of the active TGF-beta-1. Functionally, transforming growth factor beta-1: Multifunctional protein that regulates the growth and differentiation of various cell types and is involved in various processes, such as normal development, immune function, microglia function and responses to neurodegeneration. Activation into mature form follows different steps: following cleavage of the proprotein in the Golgi apparatus, Latency-associated peptide (LAP) and Transforming growth factor beta-1 (TGF-beta-1) chains remain non-covalently linked rendering TGF-beta-1 inactive during storage in extracellular matrix. At the same time, LAP chain interacts with 'milieu molecules', such as LTBP1, LRRC32/GARP and LRRC33/NRROS that control activation of TGF-beta-1 and maintain it in a latent state during storage in extracellular milieus. TGF-beta-1 is released from LAP by integrins (ITGAV:ITGB6 or ITGAV:ITGB8): integrin-binding to LAP stabilizes an alternative conformation of the LAP bowtie tail and results in distortion of the LAP chain and subsequent release of the active TGF-beta-1. Once activated following release of LAP, TGF-beta-1 acts by binding to TGF-beta receptors (TGFBR1 and TGFBR2), which transduce signal. While expressed by many cells types, TGF-beta-1 only has a very localized range of action within cell environment thanks to fine regulation of its activation by Latency-associated peptide chain (LAP) and 'milieu molecules'. Plays an important role in bone remodeling: acts as a potent stimulator of osteoblastic bone formation. Can promote either T-helper 17 cells (Th17) or regulatory T-cells (Treg) lineage differentiation in a concentration-dependent manner. Can induce epithelial-to-mesenchymal transition (EMT) and cell migration in various cell types. This Gallus gallus (Chicken) protein is Transforming growth factor beta-1 proprotein (TGFB1).